The sequence spans 397 residues: Riboflavin biosynthesis protein RibBA (397 aa).

Residues 1 to 199 (MFHRIEEALE…IEDLIAYRRH (199 aa)) form a DHBP synthase region. D-ribulose 5-phosphate-binding positions include 26–27 (RE), Asp-31, 138–142 (RAGHT), and Glu-162. A Mg(2+)-binding site is contributed by Glu-27. Residue His-141 coordinates Mg(2+). The interval 200 to 397 (HETLVTREVE…VNKLGHLLNL (198 aa)) is GTP cyclohydrolase II. GTP is bound at residue 250-254 (RVHSE). Cys-255, Cys-266, and Cys-268 together coordinate Zn(2+). GTP contacts are provided by residues Gln-271, 293–295 (EGR), and Thr-315. The active-site Proton acceptor; for GTP cyclohydrolase activity is Asp-327. The active-site Nucleophile; for GTP cyclohydrolase activity is Arg-329. Residues Thr-350 and Lys-355 each contribute to the GTP site.

In the N-terminal section; belongs to the DHBP synthase family. It in the C-terminal section; belongs to the GTP cyclohydrolase II family. Mg(2+) serves as cofactor. It depends on Mn(2+) as a cofactor. Zn(2+) is required as a cofactor.

The enzyme catalyses D-ribulose 5-phosphate = (2S)-2-hydroxy-3-oxobutyl phosphate + formate + H(+). It carries out the reaction GTP + 4 H2O = 2,5-diamino-6-hydroxy-4-(5-phosphoribosylamino)-pyrimidine + formate + 2 phosphate + 3 H(+). The protein operates within cofactor biosynthesis; riboflavin biosynthesis; 2-hydroxy-3-oxobutyl phosphate from D-ribulose 5-phosphate: step 1/1. It participates in cofactor biosynthesis; riboflavin biosynthesis; 5-amino-6-(D-ribitylamino)uracil from GTP: step 1/4. Functionally, catalyzes the conversion of D-ribulose 5-phosphate to formate and 3,4-dihydroxy-2-butanone 4-phosphate. Catalyzes the conversion of GTP to 2,5-diamino-6-ribosylamino-4(3H)-pyrimidinone 5'-phosphate (DARP), formate and pyrophosphate. The protein is Riboflavin biosynthesis protein RibBA of Bacillus cereus (strain G9842).